The chain runs to 249 residues: Ribonuclease 3 (249 aa).

The RNase III domain maps to 20 to 149 (FKEFQERISV…FIGALYLDQG (130 aa)). Residue Glu-62 participates in Mg(2+) binding. Asp-66 is a catalytic residue. Residues Asp-135 and Glu-138 each contribute to the Mg(2+) site. Residue Glu-138 is part of the active site. In terms of domain architecture, DRBM spans 175–244 (DFKSQLQEFV…AQEALAKMQK (70 aa)). The segment at 223–249 (NGRSKKEAEQHAAQEALAKMQKHHTKQ) is disordered.

It belongs to the ribonuclease III family. Homodimer. It depends on Mg(2+) as a cofactor.

It is found in the cytoplasm. The enzyme catalyses Endonucleolytic cleavage to 5'-phosphomonoester.. Digests double-stranded RNA. Involved in the processing of primary rRNA transcript to yield the immediate precursors to the large and small rRNAs (23S and 16S). Processes some mRNAs, and tRNAs when they are encoded in the rRNA operon. Processes pre-crRNA and tracrRNA of type II CRISPR loci if present in the organism. In Bacillus velezensis (strain DSM 23117 / BGSC 10A6 / LMG 26770 / FZB42) (Bacillus amyloliquefaciens subsp. plantarum), this protein is Ribonuclease 3.